The sequence spans 155 residues: Aspartate carbamoyltransferase regulatory chain (155 aa).

Zn(2+) contacts are provided by cysteine 110, cysteine 115, cysteine 139, and cysteine 142.

Belongs to the PyrI family. Contains catalytic and regulatory chains. Requires Zn(2+) as cofactor.

In terms of biological role, involved in allosteric regulation of aspartate carbamoyltransferase. The sequence is that of Aspartate carbamoyltransferase regulatory chain from Yersinia pseudotuberculosis serotype IB (strain PB1/+).